Reading from the N-terminus, the 196-residue chain is Pyridoxal 5'-phosphate synthase subunit PdxT (196 aa).

47–49 is a binding site for L-glutamine; the sequence is GES. C79 acts as the Nucleophile in catalysis. Residues R106 and 134 to 135 each bind L-glutamine; that span reads IR. Catalysis depends on charge relay system residues H170 and E172.

The protein belongs to the glutaminase PdxT/SNO family. In terms of assembly, in the presence of PdxS, forms a dodecamer of heterodimers. Only shows activity in the heterodimer.

It catalyses the reaction aldehydo-D-ribose 5-phosphate + D-glyceraldehyde 3-phosphate + L-glutamine = pyridoxal 5'-phosphate + L-glutamate + phosphate + 3 H2O + H(+). The enzyme catalyses L-glutamine + H2O = L-glutamate + NH4(+). Its pathway is cofactor biosynthesis; pyridoxal 5'-phosphate biosynthesis. Functionally, catalyzes the hydrolysis of glutamine to glutamate and ammonia as part of the biosynthesis of pyridoxal 5'-phosphate. The resulting ammonia molecule is channeled to the active site of PdxS. The chain is Pyridoxal 5'-phosphate synthase subunit PdxT from Bacillus licheniformis (strain ATCC 14580 / DSM 13 / JCM 2505 / CCUG 7422 / NBRC 12200 / NCIMB 9375 / NCTC 10341 / NRRL NRS-1264 / Gibson 46).